We begin with the raw amino-acid sequence, 543 residues long: Efflux pump mokI (543 aa).

The next 13 membrane-spanning stretches (helical) occupy residues 30 to 50, 90 to 110, 125 to 145, 153 to 173, 185 to 205, 233 to 253, 261 to 281, 307 to 327, 340 to 360, 364 to 384, 394 to 416, 428 to 448, and 509 to 529; these read LVVTSVTLVVFLMLLDMSIIV, LLTLKYTFLAFLGVFEVGSAL, AVAGMGGSGLTNGAITILASA, LLIGIMMGLSQIAIVCGPLLG, CFYINLPVGALAAILLLAIHI, LLGFVLFAAFAVMISLALEWG, SSVIIGLFCGAGISLVVFGFW, LFLGFFSGALLTFSYYLPIYF, VYMLPGIGGQIVMAIVSGAII, GYYIPWALASGIIVSISAGLV, AAWVMYQFMGGFGRGCGMQTPII, ALGISLAMFGQTFGGSLFLTL, and VGASGATFLFAWGMGQVGLIW.

The protein belongs to the major facilitator superfamily. TCR/Tet family.

It localises to the membrane. Functionally, efflux pump; part of the gene cluster that mediates the biosynthesis of monakolin K, also known as lovastatin, and which acts as a potent competitive inhibitor of HMG-CoA reductase. The polypeptide is Efflux pump mokI (Monascus pilosus (Red mold)).